A 209-amino-acid polypeptide reads, in one-letter code: Probable GTP-binding protein EngB (209 aa).

The 177-residue stretch at 22-198 (TPLEIAFVGR…NRTVGSWFDA (177 aa)) folds into the EngB-type G domain. Mg(2+) is bound by residues Ser-37 and Thr-59.

The protein belongs to the TRAFAC class TrmE-Era-EngA-EngB-Septin-like GTPase superfamily. EngB GTPase family. Requires Mg(2+) as cofactor.

Its function is as follows. Necessary for normal cell division and for the maintenance of normal septation. This Neisseria meningitidis serogroup C (strain 053442) protein is Probable GTP-binding protein EngB.